The primary structure comprises 578 residues: MAAKSDGRGVVTGFAQLHNLDEVVGTGEDDARNGSSFHICHCCNTSSCYWGCRSACLHYLRAKGKGEGKETARPTPEERLWLDCLWIVLALLVFFWDVGTDLWLAVDYYHKQDFLWSGLTLFFVLVPSVLVQILSFRWFVQDYTGGGLGSVEGLSSRRAAASLQRDKCCRLSVWIWQTVIHIFQLGQVWRYIRTMYLGIQSHRQKENQRRFYWAMMYEYADVNMLRLLETFLESAPQLVLQLCIMIQSNKAEWLQCVSALSSLLSLAWVLASYHKLLRDSRDDKKSMSYRGALVHLFWRLFTISSRVLSLALFASVFHIYFGIFVVLHWCAMAFWVIHGGTDFCMSKWEEVLFNMVVGVVYVFCWFNVREGRTRYRMVAYYVVVLLENVILTSLWYAYRDPATTDAYASLALCGVFLCFASGVACMVLYYGVLHPMGPRLRVLASSCCAELLWGLPLPPEAEPMAPTPGPRGSQATPTRGLTGEYAESDETATDTCLPVFQVRSTEPVDAAGRPIQPEGPFIKIDMPRKRYPAWDAHFVDRRLRRTVNVLQYISPNAAGIRYRDGPLLYELLQYESSL.

The next 7 helical transmembrane spans lie at 86 to 106 (WIVL…WLAV), 114 to 134 (FLWS…VQIL), 253 to 273 (WLQC…LASY), 307 to 327 (VLSL…FVVL), 348 to 368 (WEEV…WFNV), 377 to 397 (MVAY…LWYA), and 410 to 430 (LALC…VLYY).

The protein belongs to the XK family.

It localises to the cell membrane. This Tetraodon nigroviridis (Spotted green pufferfish) protein is XK-related protein 6 (xkr6).